The following is a 156-amino-acid chain: V-type proton ATPase 16 kDa proteolipid subunit c (156 aa).

At 1 to 7 the chain is on the lumenal side; it reads MAENPIY. Residues 8–30 form a helical membrane-spanning segment; sequence GPFFGVMGAASAIIFSALGAAYG. Over 31–52 the chain is Cytoplasmic; sequence TAKSGTGIAAMSVMRPELIMKS. A helical transmembrane segment spans residues 53-73; the sequence is IIPVVMAGIIAIYGLVVAVLI. Topologically, residues 74–92 are lumenal; the sequence is AGSLDSPSNNYTLYRGFIH. A helical membrane pass occupies residues 93-114; the sequence is LGAGLAVGFSGLAAGFAIGIVG. Over 115–126 the chain is Cytoplasmic; it reads DAGVRGTAQQPR. The helical transmembrane segment at 127–152 threads the bilayer; that stretch reads LFVGMILILIFAEVLGLYGLIVAIYL. Residues 153-156 are Lumenal-facing; that stretch reads YTKQ.

Belongs to the V-ATPase proteolipid subunit family. As to quaternary structure, V-ATPase is a heteromultimeric enzyme made up of two complexes: the ATP-hydrolytic V1 complex and the proton translocation V0 complex. The V1 complex consists of three catalytic AB heterodimers that form a heterohexamer, three peripheral stalks each consisting of EG heterodimers, one central rotor including subunits D and F, and the regulatory subunits C and H. The proton translocation complex V0 consists of the proton transport subunit a, a ring of proteolipid subunits c9c'', rotary subunit d, subunits e and f, and the accessory subunits VhaAC45 and ATP6AP2.

The protein localises to the membrane. Proton-conducting pore forming subunit of the V0 complex of vacuolar(H+)-ATPase (V-ATPase), a multisubunit enzyme composed of a peripheral complex (V1) that hydrolyzes ATP and a membrane integral complex (V0) that translocates protons. V-ATPase is responsible for acidifying and maintaining the pH of intracellular compartments and in some cell types, is targeted to the plasma membrane, where it is responsible for acidifying the extracellular environment. This is V-type proton ATPase 16 kDa proteolipid subunit c (VHA16) from Manduca sexta (Tobacco hawkmoth).